We begin with the raw amino-acid sequence, 81 residues long: Sec-independent protein translocase protein TatA (81 aa).

A helical membrane pass occupies residues 1 to 21 (MGGISVWQLLIIAVIVVLLFG). The disordered stretch occupies residues 42 to 81 (AMSDEDSAKNEKDADFEPKSLEKQQQKEAAPETKKDKEQA).

It belongs to the TatA/E family. In terms of assembly, the Tat system comprises two distinct complexes: a TatABC complex, containing multiple copies of TatA, TatB and TatC subunits, and a separate TatA complex, containing only TatA subunits. Substrates initially bind to the TatABC complex, which probably triggers association of the separate TatA complex to form the active translocon.

Its subcellular location is the cell inner membrane. Its function is as follows. Part of the twin-arginine translocation (Tat) system that transports large folded proteins containing a characteristic twin-arginine motif in their signal peptide across membranes. TatA could form the protein-conducting channel of the Tat system. The polypeptide is Sec-independent protein translocase protein TatA (Vibrio parahaemolyticus serotype O3:K6 (strain RIMD 2210633)).